The chain runs to 227 residues: Ubiquitin-conjugating enzyme E2 6 (227 aa).

Residues 1-206 are Cytoplasmic-facing; sequence MASKGAYKRL…NSKQSWVKSR (206 aa). Residues 5-163 enclose the UBC core domain; the sequence is GAYKRLMKEY…FPELIDKNRE (159 aa). Cysteine 87 functions as the Glycyl thioester intermediate in the catalytic mechanism. The chain crosses the membrane as a helical span at residues 207-225; the sequence is WSIAVLVFFALALARFFGA.

It belongs to the ubiquitin-conjugating enzyme family.

The protein resides in the endoplasmic reticulum membrane. The enzyme catalyses S-ubiquitinyl-[E1 ubiquitin-activating enzyme]-L-cysteine + [E2 ubiquitin-conjugating enzyme]-L-cysteine = [E1 ubiquitin-activating enzyme]-L-cysteine + S-ubiquitinyl-[E2 ubiquitin-conjugating enzyme]-L-cysteine.. The protein operates within protein modification; protein ubiquitination. Catalyzes the covalent attachment of ubiquitin to other proteins. Functions in degradation of misfolded or regulated proteins localized in the endoplasmic reticulum (ER) lumen or membrane via the ubiquitin-proteasome system. Cognate E2 conjugating enzyme for the doa10 ubiquitin ligase complex, which is part of the ERAD-C pathway responsible for the rapid degradation of membrane proteins with misfolded cytoplasmic domains. This Schizosaccharomyces pombe (strain 972 / ATCC 24843) (Fission yeast) protein is Ubiquitin-conjugating enzyme E2 6 (ubc6).